A 195-amino-acid chain; its full sequence is dITP/XTP pyrophosphatase (195 aa).

8–13 (TNNQGK) serves as a coordination point for substrate. Mg(2+) is bound by residues glutamate 39 and aspartate 68. Aspartate 68 acts as the Proton acceptor in catalysis. Substrate contacts are provided by residues serine 69, 149–152 (FGYD), lysine 172, and 177–178 (HR).

The protein belongs to the HAM1 NTPase family. In terms of assembly, homodimer. Requires Mg(2+) as cofactor.

The catalysed reaction is XTP + H2O = XMP + diphosphate + H(+). It carries out the reaction dITP + H2O = dIMP + diphosphate + H(+). It catalyses the reaction ITP + H2O = IMP + diphosphate + H(+). Pyrophosphatase that catalyzes the hydrolysis of nucleoside triphosphates to their monophosphate derivatives, with a high preference for the non-canonical purine nucleotides XTP (xanthosine triphosphate), dITP (deoxyinosine triphosphate) and ITP. Seems to function as a house-cleaning enzyme that removes non-canonical purine nucleotides from the nucleotide pool, thus preventing their incorporation into DNA/RNA and avoiding chromosomal lesions. The protein is dITP/XTP pyrophosphatase of Staphylococcus epidermidis (strain ATCC 35984 / DSM 28319 / BCRC 17069 / CCUG 31568 / BM 3577 / RP62A).